We begin with the raw amino-acid sequence, 254 residues long: Imidazole glycerol phosphate synthase subunit HisF (254 aa).

Residues Asp-11 and Asp-130 contribute to the active site.

The protein belongs to the HisA/HisF family. In terms of assembly, heterodimer of HisH and HisF.

It localises to the cytoplasm. The catalysed reaction is 5-[(5-phospho-1-deoxy-D-ribulos-1-ylimino)methylamino]-1-(5-phospho-beta-D-ribosyl)imidazole-4-carboxamide + L-glutamine = D-erythro-1-(imidazol-4-yl)glycerol 3-phosphate + 5-amino-1-(5-phospho-beta-D-ribosyl)imidazole-4-carboxamide + L-glutamate + H(+). It participates in amino-acid biosynthesis; L-histidine biosynthesis; L-histidine from 5-phospho-alpha-D-ribose 1-diphosphate: step 5/9. In terms of biological role, IGPS catalyzes the conversion of PRFAR and glutamine to IGP, AICAR and glutamate. The HisF subunit catalyzes the cyclization activity that produces IGP and AICAR from PRFAR using the ammonia provided by the HisH subunit. This Oceanobacillus iheyensis (strain DSM 14371 / CIP 107618 / JCM 11309 / KCTC 3954 / HTE831) protein is Imidazole glycerol phosphate synthase subunit HisF.